We begin with the raw amino-acid sequence, 70 residues long: Conotoxin Lt3.4 (70 aa).

The N-terminal stretch at 1–24 (MLKMGVLLFTFLVLFPLAMFQLDA) is a signal peptide. Positions 25–54 (DQPVERYAENKQDLNRDERMKIMLSALRQR) are excised as a propeptide. At Gln-55 the chain carries Pyrrolidone carboxylic acid. Intrachain disulfides connect Cys-56-Cys-68, Cys-57-Cys-66, and Cys-62-Cys-69.

It belongs to the conotoxin M superfamily. Expressed by the venom duct.

It is found in the secreted. This chain is Conotoxin Lt3.4, found in Conus litteratus (Lettered cone).